The primary structure comprises 539 residues: Phosphatidylinositol 4-phosphate 5-kinase type-1 beta (539 aa).

Positions 1-21 (MSSTAENGDAVPGKQNEEKTY) are disordered. The 371-residue stretch at 25–395 (ASSAIKGAIQ…RFLKFMNSRV (371 aa)) folds into the PIPK domain. Phosphoserine occurs at positions 445, 447, and 448.

As to quaternary structure, interacts with RAC1, AJUBA, PLD1, PLD2 and ARF1.

It localises to the cytoplasm. The protein resides in the cytosol. It is found in the cell membrane. Its subcellular location is the endomembrane system. It carries out the reaction a 1,2-diacyl-sn-glycero-3-phospho-(1D-myo-inositol 4-phosphate) + ATP = a 1,2-diacyl-sn-glycero-3-phospho-(1D-myo-inositol-4,5-bisphosphate) + ADP + H(+). It catalyses the reaction 1-octadecanoyl-2-(5Z,8Z,11Z,14Z)-eicosatetraenoyl-sn-glycero-3-phospho-1D-myo-inositol 4-phosphate + ATP = 1-octadecanoyl-2-(5Z,8Z,11Z,14Z)-eicosatetraenoyl-sn-glycero-3-phospho-1D-myo-inositol 4,5-bisphosphate + ADP + H(+). The catalysed reaction is 1-octadecanoyl-2-(9Z)-octadecenoyl-sn-glycero-3-phospho-1D-myo-inositol 4-phosphate + ATP = 1-octadecanoyl-2-(9Z)-octadecenoyl-sn-glycero-3-phospho-1D-myo-inositol 4,5-bisphosphate + ADP + H(+). The enzyme catalyses 1-octadecanoyl-2-(9Z)-octadecenoyl-sn-glycero-3-phospho-1D-myo-inositol + ATP = 1-octadecanoyl-2-(9Z)-octadecenoyl-sn-glycero-3-phospho-1D-myo-inositol 5-phosphate + ADP + H(+). It carries out the reaction 1-octadecanoyl-2-(9Z,12Z)-octadecadienoyl-sn-glycero-3-phospho-1D-myo-inositol + ATP = 1-octadecanoyl-2-(9Z,12Z)-octadecadienoyl-sn-glycero-3-phospho-1D-myo-inositol 5-phosphate + ADP + H(+). It catalyses the reaction 1-octadecanoyl-2-(5Z,8Z,11Z,14Z-eicosatetraenoyl)-sn-glycero-3-phospho-(1D-myo-inositol) + ATP = 1-octadecanoyl-2-(5Z,8Z,11Z,14Z)-eicosatetraenoyl-sn-glycero-3-phospho-1D-myo-inositol 5-phosphate + ADP + H(+). The catalysed reaction is 1,2-di-(9Z,12Z)-octadecadienoyl-sn-glycero-3-phospho-1D-myo-inositol + ATP = 1,2-di(9Z,12Z)-octadecadienoyl-sn-glycero-3-phospho-1D-myo-inositol 5-phosphate + ADP + H(+). Catalyzes the phosphorylation of phosphatidylinositol 4-phosphate (PtdIns(4)P/PI4P) to form phosphatidylinositol 4,5-bisphosphate (PtdIns(4,5)P2/PIP2), a lipid second messenger that regulates several cellular processes such as signal transduction, vesicle trafficking, actin cytoskeleton dynamics, cell adhesion, and cell motility. PtdIns(4,5)P2 can directly act as a second messenger or can be utilized as a precursor to generate other second messengers: inositol 1,4,5-trisphosphate (IP3), diacylglycerol (DAG) or phosphatidylinositol-3,4,5-trisphosphate (PtdIns(3,4,5)P3/PIP3). Mediates RAC1-dependent reorganization of actin filaments. Contributes to the activation of phospholipase PLD2. Together with PIP5K1A, is required, after stimulation by G-protein coupled receptors, for the synthesis of IP3 that will induce stable platelet adhesion. This Rattus norvegicus (Rat) protein is Phosphatidylinositol 4-phosphate 5-kinase type-1 beta.